The following is a 78-amino-acid chain: Large ribosomal subunit protein eL38 (78 aa).

The protein belongs to the eukaryotic ribosomal protein eL38 family.

The polypeptide is Large ribosomal subunit protein eL38 (RpL38) (Maconellicoccus hirsutus (Pink hibiscus mealybug)).